The primary structure comprises 174 residues: Protein VdlD (174 aa).

The HotDog ACOT-type domain occupies 20–132 (DRTKLLMSYL…YFTMVAVENG (113 aa)).

This sequence belongs to the acyl coenzyme A hydrolase family.

This is Protein VdlD (vdlD) from Helicobacter pylori (strain J99 / ATCC 700824) (Campylobacter pylori J99).